The chain runs to 490 residues: 5'-3' exonuclease PLD3 (490 aa).

The Cytoplasmic segment spans residues 1-38; sequence MKPKLMYQELKVPAEEPANELPMNEIEAWKAAEKKARW. A helical; Signal-anchor for type II membrane protein transmembrane segment spans residues 39–59; sequence VLLVLILAVVGFGALMTQLFL. Residues 60–490 are Lumenal-facing; it reads WEYGDLHLFG…DSVGNACRLL (431 aa). 2 disulfides stabilise this stretch: Cys77–Cys239 and Cys81–Cys237. 2 N-linked (GlcNAc...) asparagine glycosylation sites follow: Asn97 and Asn132. The PLD phosphodiesterase 1 domain maps to 196–223; sequence THGVLHTKFWVVDQTHFYLGSANMDWRS. Active-site residues include His201, Lys203, and Asp208. His201 acts as the Proton donor in catalysis. Residues His201 and Lys203 each coordinate phosphate. Phosphate is bound at residue Asn218. Asn236, Asn284, and Asn387 each carry an N-linked (GlcNAc...) asparagine glycan. Cysteines 366 and 487 form a disulfide. The 27-residue stretch at 411 to 437 folds into the PLD phosphodiesterase 2 domain; that stretch reads YARVNHNKYMVTERATYIGTSNWSGNY. His416 serves as a coordination point for phosphate. The Nucleophile role is filled by His416. Mg(2+) is bound at residue Phe438.

Belongs to the phospholipase D family. Homodimer. Interacts with APP. In terms of processing, N-glycosylated. Post-translationally, proteolytically processed to a soluble form that is stable within endosomes and lysosomes. During transport through the secretory pathway becomes proteolysed by cysteine proteases, thereby releasing a stable soluble lysosomal lumenal polypeptide, whereas the transmembrane-bound fragment is rapidly degraded. Its transport route to lysosomes involves ubiquitination and the ESCRT complex. Ubiquitinated. Ubiquitination mediates sorting into lysosomes.

Its subcellular location is the endoplasmic reticulum membrane. The protein resides in the lysosome lumen. The protein localises to the early endosome membrane. It localises to the late endosome membrane. It is found in the golgi apparatus membrane. Its subcellular location is the endosome membrane. The catalysed reaction is Exonucleolytic cleavage in the 5'- to 3'-direction to yield nucleoside 3'-phosphates.. The enzyme catalyses a 5'-end 5'-dephospho-ribonucleotidyl-ribonucleotide-RNA + H2O = a ribonucleoside 3'-phosphate + a 5'-end dephospho-ribonucleoside-RNA + H(+). It carries out the reaction a ribonucleoside 3'-phosphate-2'-3'-cyclophospho-GMP + H2O = a ribonucleoside 3'-phosphate + 2',3'-cyclophospho-GMP + H(+). It catalyses the reaction a 5'-end 5'-dephospho-2'-deoxyribonucleotidyl-2'-deoxyribonucleotide in single-stranded DNA + H2O = a 5'-end dephospho-2'-deoxyribonucleoside in single-stranded DNA + a 2'-deoxyribonucleoside 3'-phosphate + H(+). The catalysed reaction is a 5'-end 5'-phospho-2'-deoxyribonucleotide in single-stranded DNA + H2O = a 5'-end 5'-dephospho-2'-deoxyribonucleotide in single-stranded DNA + phosphate. The enzyme catalyses a 3-lyso-sn-glycero-1-phospho-(3'-acyl-1'-sn-glycerol) + a 1-acyl-sn-glycerol = a 3-acyl-sn-glycero-1-phospho-(3'-acyl-1'-sn-glycerol) + glycerol. It carries out the reaction 3-lyso-sn-glycero-1-phospho-(3'-(9Z-octadecenoyl)-1'-sn-glycerol) + 1-(9Z-octadecenoyl)-sn-glycerol = 3-(9Z-octadecenoyl)-sn-glycero-1-phospho-(3'-(9Z-octadecenoyl)-1'-sn-glycerol) + glycerol. Functionally, 5'-&gt;3' exonuclease that hydrolyzes the phosphodiester bond of single-stranded DNA (ssDNA) and RNA molecules to form nucleoside 3'-monophosphates and 5'-end 5'-hydroxy deoxyribonucleotide/ribonucleotide fragments. Partially redundant with PLD4, can cleave all four nucleotides displaying higher efficiency for ssDNA and RNA fragments initiated with uridine and guanosine residues and lower efficiency for cytidine-initiated substrates. As a result, it does not always degrade polynucleotides to the single nucleotide level, it can stall at specific sites sparing certain fragments from exonucleolytic degradation. Processes self and pathogenic ssDNA and RNA molecules that reach the endolysosomal compartment via phagocytosis or autophagy and may serve as 'danger' signals for recognition by innate immune receptors such as toll-like receptors (TLRs). Degrades mitochondrial CpG-rich ssDNA fragments to prevent TLR9 activation and autoinflammatory response, but it can cleave viral RNA to generate ligands for TLR7 activation and initiate antiviral immune responses. In plasmacytoid dendritic cells, it cooperates with endonuclease RNASET2 to release 2',3'-cyclic guanosine monophosphate (2',3'-cGMP), a potent stimulatory ligand for TLR7. Produces 2',3'-cGMPs and cytidine-rich RNA fragments that occupy TLR7 ligand-binding pockets and trigger a signaling-competent state. Can exert polynucleotide phosphatase activity toward 5'-phosphorylated ssDNA substrates although at a slow rate. Transphosphatidylase that catalyzes the exchange with R to S stereo-inversion of the glycerol moiety between (S,R)-lysophosphatidylglycerol (LPG) and monoacylglycerol (MAG) substrates to yield (S,S)-bis(monoacylglycero)phosphate (BMP). Can synthesize a variety of (S,S)-BMPs representing the main phospholipid constituent of lysosomal intralumenal vesicle (ILV) membranes that bind acid hydrolases for lipid degradation. Regulates the homeostasis and interorganellar communication of the endolysosomal system with an overall impact on cellular removal of dysfunctional organelles via autophagy as well as proper protein and lipid turnover. May play a role in myotube formation in response to ER stress. The polypeptide is 5'-3' exonuclease PLD3 (PLD3) (Pongo abelii (Sumatran orangutan)).